A 396-amino-acid chain; its full sequence is Ornithine aminotransferase (396 aa).

Lys255 carries the N6-(pyridoxal phosphate)lysine modification.

Belongs to the class-III pyridoxal-phosphate-dependent aminotransferase family. OAT subfamily. Pyridoxal 5'-phosphate serves as cofactor.

It is found in the cytoplasm. It catalyses the reaction a 2-oxocarboxylate + L-ornithine = L-glutamate 5-semialdehyde + an L-alpha-amino acid. The protein operates within amino-acid biosynthesis; L-proline biosynthesis; L-glutamate 5-semialdehyde from L-ornithine: step 1/1. Its function is as follows. Catalyzes the interconversion of ornithine to glutamate semialdehyde. The sequence is that of Ornithine aminotransferase from Staphylococcus epidermidis (strain ATCC 12228 / FDA PCI 1200).